The chain runs to 530 residues: Autoinducer-2 kinase (530 aa).

The protein belongs to the FGGY kinase family.

It is found in the cytoplasm. It catalyses the reaction (S)-4,5-dihydroxypentane-2,3-dione + ATP = (2S)-2-hydroxy-3,4-dioxopentyl phosphate + ADP + H(+). Its function is as follows. Catalyzes the phosphorylation of autoinducer-2 (AI-2) to phospho-AI-2, which subsequently inactivates the transcriptional regulator LsrR and leads to the transcription of the lsr operon. Phosphorylates the ring-open form of (S)-4,5-dihydroxypentane-2,3-dione (DPD), which is the precursor to all AI-2 signaling molecules, at the C5 position. The chain is Autoinducer-2 kinase from Escherichia coli (strain SMS-3-5 / SECEC).